The primary structure comprises 120 residues: MFLLYEYDIFWAFLIISSAIPVLAFFISGVLSPIRKGPEKLSSYESGIEPIGDAWLQFRIRYYMFALVFVVFDVETVFLYPWAMSFDVLGVSAFIEAFIFVLILILGLVYAWRKGALEWS.

3 helical membrane passes run 9-29, 64-84, and 88-108; these read IFWA…FISG, MFAL…PWAM, and VLGV…ILGL.

Belongs to the complex I subunit 3 family. In terms of assembly, NDH is composed of at least 16 different subunits, 5 of which are encoded in the nucleus.

The protein resides in the plastid. The protein localises to the chloroplast thylakoid membrane. It catalyses the reaction a plastoquinone + NADH + (n+1) H(+)(in) = a plastoquinol + NAD(+) + n H(+)(out). The catalysed reaction is a plastoquinone + NADPH + (n+1) H(+)(in) = a plastoquinol + NADP(+) + n H(+)(out). NDH shuttles electrons from NAD(P)H:plastoquinone, via FMN and iron-sulfur (Fe-S) centers, to quinones in the photosynthetic chain and possibly in a chloroplast respiratory chain. The immediate electron acceptor for the enzyme in this species is believed to be plastoquinone. Couples the redox reaction to proton translocation, and thus conserves the redox energy in a proton gradient. The polypeptide is NAD(P)H-quinone oxidoreductase subunit 3, chloroplastic (Barbarea verna (Land cress)).